Consider the following 142-residue polypeptide: MAKKIAGYIKLQVPAGAANPSPPIGPALGQRGVNIMEFCKAFNAKTQEMEKGMPIPTTITVFSDKSFTFAIATPPASFFLKKAAKIAKGSSTPSQTTAGTVSMAQCREIAEAKFNDLNANDLDQATKIIAGSARSMGLQVTE.

It belongs to the universal ribosomal protein uL11 family. As to quaternary structure, part of the ribosomal stalk of the 50S ribosomal subunit. Interacts with L10 and the large rRNA to form the base of the stalk. L10 forms an elongated spine to which L12 dimers bind in a sequential fashion forming a multimeric L10(L12)X complex. In terms of processing, one or more lysine residues are methylated.

In terms of biological role, forms part of the ribosomal stalk which helps the ribosome interact with GTP-bound translation factors. The sequence is that of Large ribosomal subunit protein uL11 from Maricaulis maris (strain MCS10) (Caulobacter maris).